Here is a 130-residue protein sequence, read N- to C-terminus: Small ribosomal subunit protein uS11 (130 aa).

This sequence belongs to the universal ribosomal protein uS11 family. Part of the 30S ribosomal subunit. Interacts with proteins S7 and S18. Binds to IF-3.

Functionally, located on the platform of the 30S subunit, it bridges several disparate RNA helices of the 16S rRNA. Forms part of the Shine-Dalgarno cleft in the 70S ribosome. The sequence is that of Small ribosomal subunit protein uS11 from Syntrophomonas wolfei subsp. wolfei (strain DSM 2245B / Goettingen).